We begin with the raw amino-acid sequence, 483 residues long: Glutamate--tRNA ligase (483 aa).

The short motif at 9 to 19 (PSPTGYLHIGN) is the 'HIGH' region element. The 'KMSKS' region signature appears at 250-254 (KLSKR). K253 lines the ATP pocket.

The protein belongs to the class-I aminoacyl-tRNA synthetase family. Glutamate--tRNA ligase type 1 subfamily. As to quaternary structure, monomer.

It localises to the cytoplasm. The enzyme catalyses tRNA(Glu) + L-glutamate + ATP = L-glutamyl-tRNA(Glu) + AMP + diphosphate. Its function is as follows. Catalyzes the attachment of glutamate to tRNA(Glu) in a two-step reaction: glutamate is first activated by ATP to form Glu-AMP and then transferred to the acceptor end of tRNA(Glu). This chain is Glutamate--tRNA ligase, found in Blochmanniella floridana.